The primary structure comprises 396 residues: Tryptophan synthase beta chain (396 aa).

An N6-(pyridoxal phosphate)lysine modification is found at K86.

Belongs to the TrpB family. As to quaternary structure, tetramer of two alpha and two beta chains. Pyridoxal 5'-phosphate serves as cofactor.

It catalyses the reaction (1S,2R)-1-C-(indol-3-yl)glycerol 3-phosphate + L-serine = D-glyceraldehyde 3-phosphate + L-tryptophan + H2O. Its pathway is amino-acid biosynthesis; L-tryptophan biosynthesis; L-tryptophan from chorismate: step 5/5. In terms of biological role, the beta subunit is responsible for the synthesis of L-tryptophan from indole and L-serine. The protein is Tryptophan synthase beta chain of Photobacterium profundum (strain SS9).